A 101-amino-acid polypeptide reads, in one-letter code: Ubiquitin-related modifier 1 homolog 1 (101 aa).

Gly101 carries the 1-thioglycine modification. Gly101 is covalently cross-linked (Glycyl lysine isopeptide (Gly-Lys) (interchain with K-? in acceptor proteins)).

The protein belongs to the URM1 family. In terms of processing, C-terminal thiocarboxylation occurs in 2 steps, it is first acyl-adenylated (-COAMP) via the hesA/moeB/thiF part of the MOCS3 homolog, then thiocarboxylated (-COSH) via the rhodanese domain of the MOCS3 homolog.

It is found in the cytoplasm. It functions in the pathway tRNA modification; 5-methoxycarbonylmethyl-2-thiouridine-tRNA biosynthesis. In terms of biological role, acts as a sulfur carrier required for 2-thiolation of mcm(5)S(2)U at tRNA wobble positions of cytosolic tRNA(Lys), tRNA(Glu) and tRNA(Gln). Serves as sulfur donor in tRNA 2-thiolation reaction by being thiocarboxylated (-COSH) at its C-terminus by MOCS3. The sulfur is then transferred to tRNA to form 2-thiolation of mcm(5)S(2)U. Also acts as a ubiquitin-like protein (UBL) that is covalently conjugated via an isopeptide bond to lysine residues of target proteins. The thiocarboxylated form serves as substrate for conjugation and oxidative stress specifically induces the formation of UBL-protein conjugates. The sequence is that of Ubiquitin-related modifier 1 homolog 1 from Arabidopsis thaliana (Mouse-ear cress).